Reading from the N-terminus, the 323-residue chain is Quinolinate synthase (323 aa).

2 residues coordinate iminosuccinate: His38 and Ser55. Cys100 provides a ligand contact to [4Fe-4S] cluster. Iminosuccinate is bound by residues 126-128 (YIN) and Ser143. Cys186 is a [4Fe-4S] cluster binding site. Iminosuccinate-binding positions include 212-214 (HPE) and Thr229. Cys279 serves as a coordination point for [4Fe-4S] cluster.

The protein belongs to the quinolinate synthase family. Type 2 subfamily. [4Fe-4S] cluster is required as a cofactor.

The protein resides in the cytoplasm. It carries out the reaction iminosuccinate + dihydroxyacetone phosphate = quinolinate + phosphate + 2 H2O + H(+). It participates in cofactor biosynthesis; NAD(+) biosynthesis; quinolinate from iminoaspartate: step 1/1. In terms of biological role, catalyzes the condensation of iminoaspartate with dihydroxyacetone phosphate to form quinolinate. The sequence is that of Quinolinate synthase from Gloeothece citriformis (strain PCC 7424) (Cyanothece sp. (strain PCC 7424)).